Reading from the N-terminus, the 580-residue chain is Serine/threonine-protein kinase PINK1, mitochondrial (580 aa).

Residues 1–77 constitute a mitochondrion transit peptide; it reads MAVRQALGRG…RFFRQSVAGL (77 aa). Residues 78–93 are Mitochondrial intermembrane-facing; it reads AARIQRQFMVRARGGA. A helical membrane pass occupies residues 94–110; the sequence is GPCGRAVFLAFGLGLGL. Residues 111 to 117 are required for outer membrane localization; the sequence is IEEKQAE. Topologically, residues 111–580 are cytoplasmic; sequence IEEKQAEGRR…LLLSSWRAAP (470 aa). The region spanning 156–510 is the Protein kinase domain; it reads YLIGQAIGKG…LAANVLHLSL (355 aa). ATP contacts are provided by residues 162–170 and Lys186; that span reads IGKGCNAAV. Position 227 is a phosphoserine; by autocatalysis (Ser227). The active-site Proton acceptor is the Asp361. Phosphoserine; by autocatalysis is present on Ser401.

Belongs to the protein kinase superfamily. Ser/Thr protein kinase family. Upon mitochondrial depolarization, it forms a supercomplex with TOM and TIM23 complexes. PINK1-TOM-TIM23 supercomplex formation requires PINK1 interaction with TOMM20 and TOMM70 and is critical for PINK1 stabilization at the outer mitochondrial membrane, kinase activation and downstream mitophagy. Upon mitochondrial depolarization, interacts with TIMM23; the interaction is required for PINK1 accumulation at the outer mitochondrial membrane, kinase activation by autophosphorylation and PRKN recruitement to mitochondria. Interacts with PRKN. Interacts with FBXO7. Forms a complex with PRKN and PARK7. Interacts with NENF. It depends on Mg(2+) as a cofactor. In terms of processing, proteolytically cleaved. In healthy cells, the precursor is continuously imported into the inner mitochondrial membrane (IMM), where it is proteolytically cleaved by mitochondrial-processing peptidase (MPP) and then undergoes further proteolytic cleavage by PARL or AFG3L2 to give rise to the 52 kDa short form. The 52 kDa short form is then released into the cytosol where it rapidly undergoes proteasome-dependent degradation. In unhealthy cells, when cellular stress conditions lead to the loss of mitochondrial membrane potential, mitochondrial import is impaired leading to the precursor accumulating on the outer mitochondrial membrane (OMM). If accumulation at the OMM fails and it is imported into the depolarized mitochondria, it undergoes cleavage by the IMM protease OMA1, promoting its subsequent degradation by the proteasome. Post-translationally, autophosphorylated. Loss of mitochondrial membrane potential results in the precursor accumulating on the outer mitochondrial membrane (OMM) where it is activated by autophosphorylation. Autophosphorylation at Ser-227 and Ser-401 is essential for selective recruitment of PRKN to depolarized mitochondria, via PINK1-dependent phosphorylation of ubiquitin and PRKN. In terms of tissue distribution, high levels expressed in testis, lower levels in brain, heart, lung, liver and kidney.

It localises to the mitochondrion outer membrane. The protein resides in the mitochondrion inner membrane. The protein localises to the cytoplasm. It is found in the cytosol. It catalyses the reaction L-seryl-[protein] + ATP = O-phospho-L-seryl-[protein] + ADP + H(+). The catalysed reaction is L-threonyl-[protein] + ATP = O-phospho-L-threonyl-[protein] + ADP + H(+). Functionally, serine/threonine-protein kinase which acts as a sensor of mitochondrial damage and protects against mitochondrial dysfunction during cellular stress. It phosphorylates mitochondrial proteins to coordinate mitochondrial quality control mechanisms that remove and replace dysfunctional mitochondrial components. Depending on the severity of mitochondrial damage, activity ranges from preventing apoptosis and stimulating mitochondrial biogenesis to eliminating severely damaged mitochondria via PINK1-PRKN-dependent mitophagy. When cellular stress results in irreversible mitochondrial damage, PINK1 accumulates at the outer mitochondrial membrane (OMM) where it phosphorylates pre-existing polyubiquitin chains at 'Ser-65', recruits PRKN from the cytosol to the OMM and activates PRKN by phosphorylation at 'Ser-65'. Activated PRKN then ubiquinates VDAC1 and other OMM proteins to initiate mitophagy. The PINK1-PRKN pathway also promotes fission of damaged mitochondria by phosphorylating and thus promoting the PRKN-dependent degradation of mitochondrial proteins involved in fission such as MFN2. This prevents the refusion of unhealthy mitochondria with the mitochondrial network or initiates mitochondrial fragmentation facilitating their later engulfment by autophagosomes. Also promotes mitochondrial fission independently of PRKN and ATG7-mediated mitophagy, via the phosphorylation and activation of DNM1L. Regulates motility of damaged mitochondria by promoting the ubiquitination and subsequent degradation of MIRO1 and MIRO2; in motor neurons, this likely inhibits mitochondrial intracellular anterograde transport along the axons which probably increases the chance of the mitochondria undergoing mitophagy in the soma. Required for ubiquinone reduction by mitochondrial complex I by mediating phosphorylation of complex I subunit NDUFA10. Phosphorylates LETM1, positively regulating its mitochondrial calcium transport activity. This Mus musculus (Mouse) protein is Serine/threonine-protein kinase PINK1, mitochondrial (Pink1).